The sequence spans 370 residues: 3-isopropylmalate dehydrogenase 1 (370 aa).

Residues Arg-98, Arg-108, Arg-136, and Asp-227 each contribute to the substrate site. Positions 227, 251, and 255 each coordinate Mg(2+). 289–301 serves as a coordination point for NAD(+); the sequence is GSAPDIAGQGIAN.

It belongs to the isocitrate and isopropylmalate dehydrogenases family. LeuB type 1 subfamily. In terms of assembly, homodimer. Requires Mg(2+) as cofactor. Mn(2+) is required as a cofactor.

Its subcellular location is the cytoplasm. The enzyme catalyses (2R,3S)-3-isopropylmalate + NAD(+) = 4-methyl-2-oxopentanoate + CO2 + NADH. It participates in amino-acid biosynthesis; L-leucine biosynthesis; L-leucine from 3-methyl-2-oxobutanoate: step 3/4. Its function is as follows. Catalyzes the oxidation of 3-carboxy-2-hydroxy-4-methylpentanoate (3-isopropylmalate) to 3-carboxy-4-methyl-2-oxopentanoate. The product decarboxylates to 4-methyl-2 oxopentanoate. The protein is 3-isopropylmalate dehydrogenase 1 of Bordetella bronchiseptica (strain ATCC BAA-588 / NCTC 13252 / RB50) (Alcaligenes bronchisepticus).